A 254-amino-acid polypeptide reads, in one-letter code: Phosphonates import ATP-binding protein PhnC 2 (254 aa).

In terms of domain architecture, ABC transporter spans 4 to 248 (LEVNNLGKHY…KIESIYGFQQ (245 aa)). ATP is bound at residue 37–44 (GPSGAGKS).

This sequence belongs to the ABC transporter superfamily. Phosphonates importer (TC 3.A.1.9.1) family. As to quaternary structure, the complex is composed of two ATP-binding proteins (PhnC), two transmembrane proteins (PhnE) and a solute-binding protein (PhnD).

The protein resides in the cell membrane. It catalyses the reaction phosphonate(out) + ATP + H2O = phosphonate(in) + ADP + phosphate + H(+). Its function is as follows. Part of the ABC transporter complex PhnCDE involved in phosphonates import. Responsible for energy coupling to the transport system. This chain is Phosphonates import ATP-binding protein PhnC 2, found in Oceanobacillus iheyensis (strain DSM 14371 / CIP 107618 / JCM 11309 / KCTC 3954 / HTE831).